The chain runs to 107 residues: Glutaredoxin 4 (107 aa).

Residues 4–106 (IEKIERQIKD…KIISNAVLNS (103 aa)) form the Glutaredoxin domain. K21 provides a ligand contact to glutathione. C29 is a [2Fe-2S] cluster binding site. Residues R58, F70, and 83 to 84 (CS) contribute to the glutathione site.

The protein belongs to the glutaredoxin family. Monothiol subfamily. In terms of assembly, homodimer.

Its subcellular location is the cytoplasm. Functionally, monothiol glutaredoxin involved in the biogenesis of iron-sulfur clusters. The polypeptide is Glutaredoxin 4 (grxD) (Buchnera aphidicola subsp. Schizaphis graminum (strain Sg)).